We begin with the raw amino-acid sequence, 276 residues long: Proteasome chaperone 1 (276 aa).

It belongs to the PSMG1 family. Component of the 20S proteasome chaperone. Forms a heterodimer with ADD66 that binds to proteasome precursors.

The protein localises to the cytoplasm. Involved in 20S proteasome assembly. The protein is Proteasome chaperone 1 (PBA1) of Saccharomyces cerevisiae (strain ATCC 204508 / S288c) (Baker's yeast).